Consider the following 476-residue polypeptide: Bifunctional protein HldE (476 aa).

The tract at residues 1 to 319 (MKVTLPAFEK…GALASHQGES (319 aa)) is ribokinase. 195 to 198 (NMSE) is a binding site for ATP. Asp264 is an active-site residue. Residues 345–476 (MTNGCFDILH…SIIQNIMARQ (132 aa)) are cytidylyltransferase.

It in the N-terminal section; belongs to the carbohydrate kinase PfkB family. The protein in the C-terminal section; belongs to the cytidylyltransferase family. In terms of assembly, homodimer.

It catalyses the reaction D-glycero-beta-D-manno-heptose 7-phosphate + ATP = D-glycero-beta-D-manno-heptose 1,7-bisphosphate + ADP + H(+). It carries out the reaction D-glycero-beta-D-manno-heptose 1-phosphate + ATP + H(+) = ADP-D-glycero-beta-D-manno-heptose + diphosphate. It participates in nucleotide-sugar biosynthesis; ADP-L-glycero-beta-D-manno-heptose biosynthesis; ADP-L-glycero-beta-D-manno-heptose from D-glycero-beta-D-manno-heptose 7-phosphate: step 1/4. The protein operates within nucleotide-sugar biosynthesis; ADP-L-glycero-beta-D-manno-heptose biosynthesis; ADP-L-glycero-beta-D-manno-heptose from D-glycero-beta-D-manno-heptose 7-phosphate: step 3/4. Catalyzes the phosphorylation of D-glycero-D-manno-heptose 7-phosphate at the C-1 position to selectively form D-glycero-beta-D-manno-heptose-1,7-bisphosphate. In terms of biological role, catalyzes the ADP transfer from ATP to D-glycero-beta-D-manno-heptose 1-phosphate, yielding ADP-D-glycero-beta-D-manno-heptose. The protein is Bifunctional protein HldE of Shewanella denitrificans (strain OS217 / ATCC BAA-1090 / DSM 15013).